Consider the following 396-residue polypeptide: Aspartic protease 1 (396 aa).

The signal sequence occupies residues 1–15 (MQTFVLLALVAACSA). The Peptidase A1 domain occupies 68–389 (YLGNITLGTP…DIGNGQIGFA (322 aa)). N-linked (GlcNAc...) asparagine glycosylation is present at N71. D86 is a catalytic residue. Cysteines 99 and 104 form a disulfide. Residue D278 is part of the active site. Cysteines 313 and 349 form a disulfide.

Belongs to the peptidase A1 family. In terms of assembly, interacts with B.thuringiensis endotoxin Cry6Aa; the interaction prevents Cry6Aa proteolysis by host gut proteases.

The protein localises to the cytoplasm. The protein resides in the lysosome. Its subcellular location is the secreted. Functionally, aspartic protease, which is part of the necrosis cell death pathway. Promotes B.thuringiensis Cry6Aa stability by preventing its proteolysis by host gut proteases. Required for Cry6Aa-induced necrotic death of intestinal cells. Cry6Aa uptake into the host intestinal cells triggers an increase in intracellular Ca(2+) levels leading to lysosome rupture and to the subsequent release of asp-1 which leads to necrosis. This Caenorhabditis elegans protein is Aspartic protease 1.